A 347-amino-acid polypeptide reads, in one-letter code: MDENKKRALSVALSQIEKQFGKGSVMRMGDRVIEAVEAIPTGSLMLDLALGIGGLPKGRVVEIYGPESSGKTTLTLQAIAQCQKKGGTAAFIDAEHALDPIYAGKLGVNVDDLLLSQPDTGEQALEIADMLVRSGSIDIMVIDSVAALTPRAEIEGEMGDQLPGLQARLMSQALRKLTGNIKRSNTLVIFINQLRMKIGVMMPGQSPETTTGGNALKFYASVRLDIRRIGAIKKGDEIIGNQTKIKVVKNKLAPPFKQVVTEILYGEGISREGELIEMGVEAKLVEKAGAWYSYGGERIGQGKDNARGYLRENPHLAAKLEADLREKFEPTELSREEGDEDTLEDTM.

65–72 (GPESSGKT) is a binding site for ATP. Residues 327–336 (KFEPTELSRE) are compositionally biased toward basic and acidic residues. The disordered stretch occupies residues 327–347 (KFEPTELSREEGDEDTLEDTM). Residues 337–347 (EGDEDTLEDTM) show a composition bias toward acidic residues.

It belongs to the RecA family.

It is found in the cytoplasm. Its function is as follows. Can catalyze the hydrolysis of ATP in the presence of single-stranded DNA, the ATP-dependent uptake of single-stranded DNA by duplex DNA, and the ATP-dependent hybridization of homologous single-stranded DNAs. It interacts with LexA causing its activation and leading to its autocatalytic cleavage. The sequence is that of Protein RecA from Xylella fastidiosa (strain 9a5c).